A 675-amino-acid chain; its full sequence is Protein REPRESSOR OF VERNALIZATION 1 (675 aa).

The disordered stretch occupies residues 1 to 143 (MGRRRRFTQQ…DPVKVTGKGK (143 aa)). Residues 22-31 (AEPPKTAKPA) are compositionally biased toward low complexity. Positions 48–70 (EEEDEDEEDELELEDEEDDEKDL) are enriched in acidic residues. The span at 71 to 86 (EEMRRNEEEERREETR) shows a compositional bias: basic and acidic residues. The Nuclear localization signal motif lies at 73-80 (MRRNEEEE). Residues 87–96 (TRRRRGRKPK) show a composition bias toward basic residues. The segment covering 113 to 127 (SDEEEEEEVREEDST) has biased composition (acidic residues). The BAH domain maps to 157 to 275 (NTFELEDPVL…TVAKKLWNLT (119 aa)). Disordered stretches follow at residues 300–349 (ELPD…KPET), 493–512 (GLTP…LQMT), and 587–675 (LASP…ADHE). Basic and acidic residues-rich tracts occupy residues 333-346 (VSRD…HFVK), 499-512 (KTSE…LQMT), and 613-627 (KLEK…KPEE). A TFIIS central domain is found at 372–518 (YRDKWLDKLL…LQMTDARCER (147 aa)).

As to expression, expressed constitutively.

It is found in the nucleus. Functionally, component of a grass-specific mechanism of vernalization, a process by which prolonged cold exposure provides competence to flower in daylengths longer than 12 hours. Negative regulator of flowering required for vernalization establishment by repressing VRN1 before vernalization and in the fall season. The polypeptide is Protein REPRESSOR OF VERNALIZATION 1 (Brachypodium distachyon (Purple false brome)).